The chain runs to 233 residues: UPF0758 protein TTE0897 (233 aa).

The MPN domain maps to 108–230; sequence SVTSPEDVIN…GISLKEKGYY (123 aa). Residues His179, His181, and Asp192 each contribute to the Zn(2+) site. The JAMM motif motif lies at 179-192; it reads HNHPSGDPTPSRED.

The protein belongs to the UPF0758 family.

The chain is UPF0758 protein TTE0897 from Caldanaerobacter subterraneus subsp. tengcongensis (strain DSM 15242 / JCM 11007 / NBRC 100824 / MB4) (Thermoanaerobacter tengcongensis).